Consider the following 339-residue polypeptide: Ribonucleoside-diphosphate reductase subunit beta (339 aa).

Fe cation contacts are provided by Asp87 and His121. The active site involves Tyr125. His215 is a binding site for Fe cation.

It belongs to the ribonucleoside diphosphate reductase small chain family. As to quaternary structure, tetramer of two alpha and two beta subunits. It depends on Fe cation as a cofactor.

It carries out the reaction a 2'-deoxyribonucleoside 5'-diphosphate + [thioredoxin]-disulfide + H2O = a ribonucleoside 5'-diphosphate + [thioredoxin]-dithiol. Functionally, provides the precursors necessary for DNA synthesis. Catalyzes the biosynthesis of deoxyribonucleotides from the corresponding ribonucleotides. In Mycoplasma pneumoniae (strain ATCC 29342 / M129 / Subtype 1) (Mycoplasmoides pneumoniae), this protein is Ribonucleoside-diphosphate reductase subunit beta (nrdF).